The primary structure comprises 632 residues: Chaperone protein HtpG (632 aa).

The segment at 1-339 is a; substrate-binding; that stretch reads MAHETMSFQA…SADLPLNVSR (339 aa). The tract at residues 340–559 is b; sequence EILQESRDVK…DNDMSGYLQR (220 aa). Residues 560–632 are c; it reads MLKAAGQNAP…TNALLLSRAA (73 aa).

This sequence belongs to the heat shock protein 90 family. As to quaternary structure, homodimer.

It is found in the cytoplasm. Functionally, molecular chaperone. Has ATPase activity. The chain is Chaperone protein HtpG from Burkholderia lata (strain ATCC 17760 / DSM 23089 / LMG 22485 / NCIMB 9086 / R18194 / 383).